The primary structure comprises 380 residues: MAKKDYYDTLGVPKNASDEDIKKAYRKLAMKHHPDRNQGDTSKVSEDKFKEAKEAYEMLSDAQKRAAYDQYGHAGVDPNRGGGPGAEGFGGFAEAFGDIFGDVFGGQRGGAQGGGGRQVYRGGDLSYAMEVTLEEAAAGKEAQIRIPSWDDCGICHGTGAKPGTKVATCTTCHGHGVVQMRQGFFSVQQTCPQCKGSGKLIPSPCVACHGVGKTKNNKTLEVKIPAGIDDGMRIRSTGNGEPGTNGGPPGDLYIEIRLKKHDIFERDGDDLHCSMPISFMTAALGGEIEVPTLAGKAAIDIPEGTQAGKQFRLRGKGIKGVRSSYPGDLYCHITVETPVKLTEHQRKLLKELDESIKKGGAKHSPSEEGWTDKLKNFFGA.

The region spanning 5-72 is the J domain; that stretch reads DYYDTLGVPK…QKRAAYDQYG (68 aa). Positions 21-47 are disordered; that stretch reads IKKAYRKLAMKHHPDRNQGDTSKVSED. Residues 24 to 34 are compositionally biased toward basic residues; sequence AYRKLAMKHHP. The span at 35-47 shows a compositional bias: basic and acidic residues; that stretch reads DRNQGDTSKVSED. Residues 139-217 form a CR-type zinc finger; it reads GKEAQIRIPS…CHGVGKTKNN (79 aa). Residues Cys-152, Cys-155, Cys-169, Cys-172, Cys-191, Cys-194, Cys-205, and Cys-208 each coordinate Zn(2+). 4 CXXCXGXG motif repeats span residues 152-159, 169-176, 191-198, and 205-212; these read CGICHGTG, CTTCHGHG, CPQCKGSG, and CVACHGVG.

This sequence belongs to the DnaJ family. Homodimer. Requires Zn(2+) as cofactor.

The protein localises to the cytoplasm. Functionally, participates actively in the response to hyperosmotic and heat shock by preventing the aggregation of stress-denatured proteins and by disaggregating proteins, also in an autonomous, DnaK-independent fashion. Unfolded proteins bind initially to DnaJ; upon interaction with the DnaJ-bound protein, DnaK hydrolyzes its bound ATP, resulting in the formation of a stable complex. GrpE releases ADP from DnaK; ATP binding to DnaK triggers the release of the substrate protein, thus completing the reaction cycle. Several rounds of ATP-dependent interactions between DnaJ, DnaK and GrpE are required for fully efficient folding. Also involved, together with DnaK and GrpE, in the DNA replication of plasmids through activation of initiation proteins. This Polaromonas naphthalenivorans (strain CJ2) protein is Chaperone protein DnaJ.